The primary structure comprises 843 residues: Structure-specific endonuclease subunit SLX4 (843 aa).

5 disordered regions span residues 26–111, 281–313, 339–377, 603–655, and 729–748; these read SPPS…KTTT, AIPTPTESSTTEDIQGSSSKQQRVKAKKPQKGK, NVAPKSPGRKNISNRPSGMKHSNSGRGKSSTLKNDNGPP, SKTF…AKAL, and ATPNARHSRQRSSSTSFSIE. Polar residues-rich tracts occupy residues 50–69 and 285–301; these read ASFSKTPSRKTTSPDSNGEN and PTESSTTEDIQGSSSKQ. Basic residues predominate over residues 302–311; that stretch reads QRVKAKKPQK. 2 stretches are compositionally biased toward polar residues: residues 349–372 and 603–616; these read NISNRPSGMKHSNSGRGKSSTLKN and SKTFMPESKPNQGT. Basic and acidic residues predominate over residues 617–636; sequence DDARKNGFRKENHSDVRVRP. Over residues 739–748 the composition is skewed to low complexity; it reads RSSSTSFSIE.

Belongs to the SLX4 family. As to quaternary structure, forms a heterodimer with SLX1. In terms of processing, phosphorylated in response to DNA damage.

Its subcellular location is the nucleus. In terms of biological role, regulatory subunit of the SLX1-SLX4 structure-specific endonuclease that resolves DNA secondary structures generated during DNA repair and recombination. Has endonuclease activity towards branched DNA substrates, introducing single-strand cuts in duplex DNA close to junctions with ss-DNA. The chain is Structure-specific endonuclease subunit SLX4 from Ajellomyces capsulatus (strain G186AR / H82 / ATCC MYA-2454 / RMSCC 2432) (Darling's disease fungus).